Reading from the N-terminus, the 194-residue chain is ATP-dependent Clp protease proteolytic subunit 1 (194 aa).

The active-site Nucleophile is the serine 99. Histidine 124 is an active-site residue.

It belongs to the peptidase S14 family. As to quaternary structure, fourteen ClpP subunits assemble into 2 heptameric rings which stack back to back to give a disk-like structure with a central cavity, resembling the structure of eukaryotic proteasomes.

It localises to the cytoplasm. The catalysed reaction is Hydrolysis of proteins to small peptides in the presence of ATP and magnesium. alpha-casein is the usual test substrate. In the absence of ATP, only oligopeptides shorter than five residues are hydrolyzed (such as succinyl-Leu-Tyr-|-NHMec, and Leu-Tyr-Leu-|-Tyr-Trp, in which cleavage of the -Tyr-|-Leu- and -Tyr-|-Trp bonds also occurs).. Functionally, cleaves peptides in various proteins in a process that requires ATP hydrolysis. Has a chymotrypsin-like activity. Plays a major role in the degradation of misfolded proteins. This Borreliella burgdorferi (strain ATCC 35210 / DSM 4680 / CIP 102532 / B31) (Borrelia burgdorferi) protein is ATP-dependent Clp protease proteolytic subunit 1.